Consider the following 209-residue polypeptide: NADH-ubiquinone oxidoreductase subunit 9 (209 aa).

The protein belongs to the complex I 30 kDa subunit family. In terms of assembly, complex I is composed of about 45 different subunits.

The protein localises to the mitochondrion inner membrane. The catalysed reaction is a ubiquinone + NADH + 5 H(+)(in) = a ubiquinol + NAD(+) + 4 H(+)(out). In terms of biological role, core subunit of the mitochondrial membrane respiratory chain NADH dehydrogenase (Complex I) that is believed to belong to the minimal assembly required for catalysis. Complex I functions in the transfer of electrons from NADH to the respiratory chain. The immediate electron acceptor for the enzyme is believed to be ubiquinone. In Dictyostelium discoideum (Social amoeba), this protein is NADH-ubiquinone oxidoreductase subunit 9 (nad9).